A 434-amino-acid polypeptide reads, in one-letter code: CCA tRNA nucleotidyltransferase 1, mitochondrial (434 aa).

A mitochondrion-targeting transit peptide spans 1 to 41; that stretch reads MQSVLYPWHRQVLRCSWSRLCLLKRYLFTMKLQSPEFQSLF. Residues glycine 64 and arginine 67 each contribute to the ATP site. CTP contacts are provided by glycine 64 and arginine 67. Aspartate 77 and aspartate 79 together coordinate Mg(2+). Arginine 151, aspartate 194, arginine 197, arginine 200, and arginine 203 together coordinate ATP. Arginine 151, aspartate 194, arginine 197, arginine 200, and arginine 203 together coordinate CTP. Residue serine 400 is modified to Phosphoserine. Lysine 402 is subject to N6-acetyllysine.

Belongs to the tRNA nucleotidyltransferase/poly(A) polymerase family. As to quaternary structure, monomer, and homodimer. It depends on Mg(2+) as a cofactor.

It is found in the mitochondrion. The protein resides in the cytoplasm. The protein localises to the nucleus. The catalysed reaction is a tRNA precursor + 2 CTP + ATP = a tRNA with a 3' CCA end + 3 diphosphate. It carries out the reaction a tRNA with a 3' CCA end + 2 CTP + ATP = a tRNA with a 3' CCACCA end + 3 diphosphate. In terms of biological role, nucleotidyltransferase that catalyzes the addition and repair of the essential 3'-terminal CCA sequence in tRNAs, which is necessary for the attachment of amino acids to the 3' terminus of tRNA molecules, using CTP and ATP as substrates. tRNA 3'-terminal CCA addition is required both for tRNA processing and repair. Promotes tRNA repair and recycling downstream of the ribosome-associated quality control (RQC) pathway by mediating addition of the tRNA 3'-terminal CCA following cleavage by ANKZF1 and repair by ELAC1. Also involved in tRNA surveillance by mediating tandem CCA addition to generate a CCACCA at the 3' terminus of unstable tRNAs and tRNA-like transcripts. While stable tRNAs receive only 3'-terminal CCA, unstable tRNAs beginning with GG are marked with CCACCA and rapidly degraded. The structural flexibility of RNA controls the choice between CCA versus CCACCA addition: following the first CCA addition cycle, nucleotide-binding to the active site triggers a clockwise screw motion, producing torque on the RNA. This ejects stable RNAs, whereas unstable RNAs are refolded while bound to the enzyme and subjected to a second CCA catalytic cycle. In Mus musculus (Mouse), this protein is CCA tRNA nucleotidyltransferase 1, mitochondrial (Trnt1).